Consider the following 497-residue polypeptide: Zinc finger protein 3 (497 aa).

Residues 1-20 show a composition bias toward basic and acidic residues; the sequence is MGTEKKEGLPKEETSEDSKP. Residues 1-53 are disordered; it reads MGTEKKEGLPKEETSEDSKPHGQTVEKLAQEVCHGHEFGEASEEDMSEGHLRE. Glycyl lysine isopeptide (Lys-Gly) (interchain with G-Cter in SUMO2) cross-links involve residues Lys-6 and Lys-11. C2H2-type zinc fingers lie at residues 136 to 158, 164 to 186, 192 to 214, 220 to 242, 248 to 270, 276 to 298, 304 to 326, 332 to 354, 360 to 382, 388 to 410, 416 to 438, 444 to 466, and 472 to 494; these read HTCKECGKAFNQNSHLIQHMRVH, FECKECGKTFGTNSSLRRHQRIH, FACTECGKAFIQSSHLIHHHRIH, YKCEECGKAFSQNSALILHQRIH, YECNECGKTFRVSSQLIQHQRIH, HECSECGKAFKHSSGLIRHQKIH, YLCNECGKGFGQSSELIRHQRIH, YECSECGKTFGQNSEIIRHIRIH, YVCKECGKAFRGNSELLRHERIH, YECFECGKAFRRTSHLIVHQRIH, HQCNECARTFWDNSELLLHQKIH, YECSECEKTFSQHSQLTIHQRIH, and YECQECQKTFSRSSHLLRHQSVH.

The protein belongs to the krueppel C2H2-type zinc-finger protein family.

Its subcellular location is the nucleus. May be involved in transcriptional regulation. The chain is Zinc finger protein 3 (Zfp3) from Mus musculus (Mouse).